The sequence spans 197 residues: Fe/S biogenesis protein NfuA (197 aa).

Residues C155 and C158 each coordinate [4Fe-4S] cluster.

It belongs to the NfuA family. In terms of assembly, homodimer. It depends on [4Fe-4S] cluster as a cofactor.

In terms of biological role, involved in iron-sulfur cluster biogenesis. Binds a 4Fe-4S cluster, can transfer this cluster to apoproteins, and thereby intervenes in the maturation of Fe/S proteins. Could also act as a scaffold/chaperone for damaged Fe/S proteins. The chain is Fe/S biogenesis protein NfuA from Pseudomonas syringae pv. syringae (strain B728a).